A 222-amino-acid chain; its full sequence is Voltage-dependent calcium channel gamma-1 subunit (222 aa).

The Cytoplasmic portion of the chain corresponds to Met1–Arg10. The helical transmembrane segment at Val11–Ser29 threads the bilayer. Residues Asp30–Ala108 lie on the Extracellular side of the membrane. Asn43 and Asn79 each carry an N-linked (GlcNAc...) asparagine glycan. The cysteines at positions 57 and 80 are disulfide-linked. A helical membrane pass occupies residues Ala109 to Phe129. At Arg130–Asp134 the chain is on the cytoplasmic side. Residues Tyr135–Leu155 form a helical membrane-spanning segment. The Extracellular segment spans residues Glu156–Ser179. Residues Trp180–Leu204 traverse the membrane as a helical segment. Over Pro205 to His222 the chain is Cytoplasmic.

It belongs to the PMP-22/EMP/MP20 family. CACNG subfamily. As to quaternary structure, component of a calcium channel complex consisting of a pore-forming alpha subunit (CACNA1S) and the ancillary subunits CACNB1 or CACNB2, CACNG1 and CACNA2D1. The channel complex contains alpha, beta, gamma and delta subunits in a 1:1:1:1 ratio, i.e. it contains either CACNB1 or CACNB2. In terms of processing, N-glycosylated. As to expression, skeletal muscle (at protein level).

The protein localises to the cell membrane. Its subcellular location is the sarcolemma. In terms of biological role, regulatory subunit of the voltage-gated calcium channel that gives rise to L-type calcium currents in skeletal muscle. Regulates channel inactivation kinetics. The chain is Voltage-dependent calcium channel gamma-1 subunit (CACNG1) from Oryctolagus cuniculus (Rabbit).